Reading from the N-terminus, the 348-residue chain is NADH-ubiquinone oxidoreductase chain 2 (348 aa).

The next 10 helical transmembrane spans lie at 1–21, 25–45, 60–80, 93–115, 149–169, 177–197, 200–220, 239–259, 274–294, and 326–346; these read MSPYVTMILISSLGLGTTITF, SWLMAWMGLEINTLAITPLMV, FLTQATASGLLLFATLNNAWM, LSAPMITMALALKMGVAPMHFWL, LNTTTMTILGLTSTIIGGLGG, KVLAYSSIAHLGWMVIIIQYS, LALLNLLLYITMTSTAFLTLM, IATMTAMLALLALGGLPPLTG, NLPALATLMALSALLSLFFYL, and LAMLSIMTLMALPTTPTMVAI.

Belongs to the complex I subunit 2 family.

It is found in the mitochondrion inner membrane. The catalysed reaction is a ubiquinone + NADH + 5 H(+)(in) = a ubiquinol + NAD(+) + 4 H(+)(out). Functionally, core subunit of the mitochondrial membrane respiratory chain NADH dehydrogenase (Complex I) that is believed to belong to the minimal assembly required for catalysis. Complex I functions in the transfer of electrons from NADH to the respiratory chain. The immediate electron acceptor for the enzyme is believed to be ubiquinone. The chain is NADH-ubiquinone oxidoreductase chain 2 (MT-ND2) from Latimeria chalumnae (Coelacanth).